The primary structure comprises 122 residues: Large ribosomal subunit protein uL14 (122 aa).

This sequence belongs to the universal ribosomal protein uL14 family. In terms of assembly, part of the 50S ribosomal subunit. Forms a cluster with proteins L3 and L19. In the 70S ribosome, L14 and L19 interact and together make contacts with the 16S rRNA in bridges B5 and B8.

In terms of biological role, binds to 23S rRNA. Forms part of two intersubunit bridges in the 70S ribosome. This chain is Large ribosomal subunit protein uL14, found in Corynebacterium efficiens (strain DSM 44549 / YS-314 / AJ 12310 / JCM 11189 / NBRC 100395).